The following is a 384-amino-acid chain: MASLFLTIISLLFAAFSSSVVEAAYSNGYTIPKLLPNPIDSCWRRNPYWASNRRALADCAVGFGKSAVGGKYGSIYVVTNPSDDPENPRPGTLRYAVIQSKPLWITFARDMVIVLRNELIMNSYKTIDGRGAKVEIAYGPCITIQHVSHVIIHGISIHDCKPGKSGRVRSSPTHVGSRKGSDGDAIAIFDSSHIWIDHCFFSRCQDGLIDVLHASTAVTISNNYFTQHDKVMLLGHNDNNVEDKIMRVTIAFNHFGPGLIERMPRVRRGYAHVANNRYEKWQMYAIGGSADPTIFSEGNYFVASDDPSKKQVTKRIDSGYDWKRWKWRTSKDVFKNGAYFVPSGYGTVTPLYGRAERFPVSHGSLVPLLTSSAGPLHCYSGRIC.

Residues 1–23 (MASLFLTIISLLFAAFSSSVVEA) form the signal peptide. Ca(2+) is bound by residues D182, D206, and D210. R262 is a catalytic residue.

It belongs to the polysaccharide lyase 1 family. Ca(2+) is required as a cofactor.

It catalyses the reaction Eliminative cleavage of (1-&gt;4)-alpha-D-galacturonan to give oligosaccharides with 4-deoxy-alpha-D-galact-4-enuronosyl groups at their non-reducing ends.. It functions in the pathway glycan metabolism; pectin degradation; 2-dehydro-3-deoxy-D-gluconate from pectin: step 2/5. This chain is Putative pectate lyase 2, found in Arabidopsis thaliana (Mouse-ear cress).